We begin with the raw amino-acid sequence, 545 residues long: Cytochrome P450 monooxygenase sdnB (545 aa).

The N-linked (GlcNAc...) asparagine glycan is linked to asparagine 5. The chain crosses the membrane as a helical span at residues 30-50 (SILALTPLQGIALFLCLFWGY). N-linked (GlcNAc...) asparagine glycosylation is present at asparagine 276. A helical membrane pass occupies residues 322–342 (LPILILIILVPAAHTTAMGIS). N-linked (GlcNAc...) asparagine glycosylation is found at asparagine 393 and asparagine 476. Position 486 (cysteine 486) interacts with heme.

Belongs to the cytochrome P450 family. The cofactor is heme.

Its subcellular location is the membrane. The protein operates within antibiotic biosynthesis. Its function is as follows. Cytochrome P450 monooxygenase; part of the gene cluster that mediates the biosynthesis of sordarin and hypoxysordarin, glycoside antibiotics with a unique tetracyclic diterpene aglycone structure. First, the geranylgeranyl diphosphate synthase sdnC constructs GGDP from farnesyl diphosphate and isopentenyl diphosphate. The diterpene cyclase sdnA then catalyzes the cyclization of GGDP to afford cycloaraneosene. Cycloaraneosene is then hydroxylated four times by the putative cytochrome P450 monooxygenases sdnB, sdnE, sdnF and sdnH to give a hydroxylated cycloaraneosene derivative such as cycloaraneosene-8,9,13,19-tetraol. Although the order of the hydroxylations is unclear, at least C8, C9 and C13 of the cycloaraneosene skeleton are hydroxylated before the sordaricin formation. Dehydration of the 13-hydroxy group of the hydroxylated cycloaraneosene derivative might be catalyzed by an unassigned hypothetical protein such as sdnG and sdnP to construct the cyclopentadiene moiety. The FAD-dependent oxidoreductase sdnN is proposed to catalyze the oxidation at C9 of the hydroxylated cycloaraneosene derivative and also catalyze the Baeyer-Villiger oxidation to give the lactone intermediate. The presumed lactone intermediate would be hydrolyzed to give an acrolein moiety and a carboxylate moiety. Then, [4+2]cycloaddition would occur between the acrolein moiety and the cyclopentadiene moiety to give sordaricin. SdnN might also be involved in the [4+2]cycloaddition after the hypothesized oxidation to accommodate the oxidized product and prompt the [4+2]cycloaddition. GDP-6-deoxy-D-altrose may be biosynthesized from GDP-D-mannose by the putative GDP-mannose-4,6-dehydratase sdnI and the short-chain dehydrogenase sdnK. The glycosyltransferase sdnJ catalyzes the attachment of 6-deoxy-D-altrose onto the 19-hydroxy group of sordaricin to give 4'-O-demethylsordarin. The methyltransferase sdnD would complete the biosynthesis of sordarin. Sordarin can be further modified into hypoxysordarin. The unique acyl chain at the 3'-hydroxy group of hypoxysordarin would be constructed by an iterative type I PKS sdnO and the trans-acting polyketide methyltransferase sdnL. SdnL would be responsible for the introduction of an alpha-methyl group of the polyketide chain. Alternatively, the beta-lactamase-like protein sdnR might be responsible for the cleavage and transfer of the polyketide chain from the PKS sdnO to sordarin. Two putative cytochrome P450 monooxygenases, sdnQ and sdnT, might catalyze the epoxidations of the polyketide chain to complete the biosynthesis of hypoxysordarin. Transcriptional regulators sdnM and sdnS are presumably encoded for the transcriptional regulation of the expression of the sdn gene cluster. In Sordaria araneosa (Pleurage araneosa), this protein is Cytochrome P450 monooxygenase sdnB.